Consider the following 177-residue polypeptide: Protein GrpE (177 aa).

This sequence belongs to the GrpE family. Homodimer. K(+) serves as cofactor.

Its subcellular location is the cytoplasm. Functionally, participates actively in the response to hyperosmotic and heat shock by preventing the aggregation of stress-denatured proteins, in association with DnaK and GrpE. It is the nucleotide exchange factor for DnaK and may function as a thermosensor. Unfolded proteins bind initially to DnaJ; upon interaction with the DnaJ-bound protein, DnaK hydrolyzes its bound ATP, resulting in the formation of a stable complex. GrpE releases ADP from DnaK; ATP binding to DnaK triggers the release of the substrate protein, thus completing the reaction cycle. Several rounds of ATP-dependent interactions between DnaJ, DnaK and GrpE are required for fully efficient folding. The polypeptide is Protein GrpE (Thermus thermophilus (strain ATCC 27634 / DSM 579 / HB8)).